A 381-amino-acid chain; its full sequence is Chaperone protein DnaJ (381 aa).

The J domain maps to 4–69 (DYYEILGVAR…EKRARYDQFG (66 aa)). The CR-type zinc finger occupies 139–221 (GGEKELRVTR…CGGSGLVRKT (83 aa)). Positions 152, 155, 169, 172, 195, 198, 209, and 212 each coordinate Zn(2+). 4 CXXCXGXG motif repeats span residues 152–159 (CGHCHGNG), 169–176 (CPTCQGRG), 195–202 (CSTCRGEG), and 209–216 (CRECGGSG).

This sequence belongs to the DnaJ family. In terms of assembly, homodimer. It depends on Zn(2+) as a cofactor.

The protein localises to the cytoplasm. Participates actively in the response to hyperosmotic and heat shock by preventing the aggregation of stress-denatured proteins and by disaggregating proteins, also in an autonomous, DnaK-independent fashion. Unfolded proteins bind initially to DnaJ; upon interaction with the DnaJ-bound protein, DnaK hydrolyzes its bound ATP, resulting in the formation of a stable complex. GrpE releases ADP from DnaK; ATP binding to DnaK triggers the release of the substrate protein, thus completing the reaction cycle. Several rounds of ATP-dependent interactions between DnaJ, DnaK and GrpE are required for fully efficient folding. Also involved, together with DnaK and GrpE, in the DNA replication of plasmids through activation of initiation proteins. In Carboxydothermus hydrogenoformans (strain ATCC BAA-161 / DSM 6008 / Z-2901), this protein is Chaperone protein DnaJ.